Reading from the N-terminus, the 150-residue chain is uncharacterized protein (150 aa).

The signal sequence occupies residues 1–21 (MAMEMAMMGLLGTVVGASAMG).

This is an uncharacterized protein from Mycobacterium tuberculosis (strain CDC 1551 / Oshkosh).